Reading from the N-terminus, the 352-residue chain is tRNA pseudouridine synthase D (352 aa).

Residue aspartate 78 is the Nucleophile of the active site. Residues 153 to 299 (GVPNYYGEQR…LDQDRRPLLL (147 aa)) enclose the TRUD domain.

This sequence belongs to the pseudouridine synthase TruD family.

It carries out the reaction uridine(13) in tRNA = pseudouridine(13) in tRNA. Its function is as follows. Responsible for synthesis of pseudouridine from uracil-13 in transfer RNAs. The protein is tRNA pseudouridine synthase D of Aeromonas hydrophila subsp. hydrophila (strain ATCC 7966 / DSM 30187 / BCRC 13018 / CCUG 14551 / JCM 1027 / KCTC 2358 / NCIMB 9240 / NCTC 8049).